Here is a 405-residue protein sequence, read N- to C-terminus: Aspartokinase (405 aa).

7-10 (KYGG) is an ATP binding site. Residue 25-30 (RIAHYR) participates in substrate binding. An ATP-binding site is contributed by serine 41. Residues 47–49 (TDE), glutamate 74, 125–126 (LD), 150–153 (RGGS), and serine 153 each bind substrate. ATP-binding positions include 173-174 (TD), 179-184 (YTTDPH), and arginine 209. 2 consecutive ACT domains span residues 263 to 342 (IGLI…IAKV) and 344 to 405 (IVGV…LDKA). Residues aspartate 270, 274 to 275 (IA), 288 to 290 (AVD), glutamine 294, 355 to 356 (VP), 369 to 370 (NI), and 376 to 377 (SE) contribute to the substrate site.

The protein belongs to the aspartokinase family. Heterotetramer consisting of 2 isoforms Alpha (catalytic and regulation) and of a homodimer of 2 isoforms Beta (regulation and thermostability).

The enzyme catalyses L-aspartate + ATP = 4-phospho-L-aspartate + ADP. It participates in amino-acid biosynthesis; L-lysine biosynthesis via DAP pathway; (S)-tetrahydrodipicolinate from L-aspartate: step 1/4. It functions in the pathway amino-acid biosynthesis; L-methionine biosynthesis via de novo pathway; L-homoserine from L-aspartate: step 1/3. The protein operates within amino-acid biosynthesis; L-threonine biosynthesis; L-threonine from L-aspartate: step 1/5. With respect to regulation, inhibited by threonine. In terms of biological role, catalyzes the phosphorylation of the beta-carboxyl group of aspartic acid with ATP to yield 4-phospho-L-aspartate, which is involved in the branched biosynthetic pathway leading to the biosynthesis of amino acids threonine, isoleucine and methionine. The protein is Aspartokinase (ask) of Thermus thermophilus.